We begin with the raw amino-acid sequence, 208 residues long: Uracil phosphoribosyltransferase (208 aa).

Residues Arg78, Arg103, and 130–138 (DPMLATGGS) contribute to the 5-phospho-alpha-D-ribose 1-diphosphate site. Residues Ile193 and 198–200 (GDA) contribute to the uracil site. Asp199 contacts 5-phospho-alpha-D-ribose 1-diphosphate.

It belongs to the UPRTase family. Mg(2+) serves as cofactor.

It catalyses the reaction UMP + diphosphate = 5-phospho-alpha-D-ribose 1-diphosphate + uracil. It participates in pyrimidine metabolism; UMP biosynthesis via salvage pathway; UMP from uracil: step 1/1. Allosterically activated by GTP. Functionally, catalyzes the conversion of uracil and 5-phospho-alpha-D-ribose 1-diphosphate (PRPP) to UMP and diphosphate. In Trichlorobacter lovleyi (strain ATCC BAA-1151 / DSM 17278 / SZ) (Geobacter lovleyi), this protein is Uracil phosphoribosyltransferase.